Consider the following 465-residue polypeptide: UDP-N-acetylmuramoylalanine--D-glutamate ligase (465 aa).

124–130 provides a ligand contact to ATP; it reads GSDGKTT.

The protein belongs to the MurCDEF family.

Its subcellular location is the cytoplasm. It catalyses the reaction UDP-N-acetyl-alpha-D-muramoyl-L-alanine + D-glutamate + ATP = UDP-N-acetyl-alpha-D-muramoyl-L-alanyl-D-glutamate + ADP + phosphate + H(+). The protein operates within cell wall biogenesis; peptidoglycan biosynthesis. In terms of biological role, cell wall formation. Catalyzes the addition of glutamate to the nucleotide precursor UDP-N-acetylmuramoyl-L-alanine (UMA). This is UDP-N-acetylmuramoylalanine--D-glutamate ligase from Ruminiclostridium cellulolyticum (strain ATCC 35319 / DSM 5812 / JCM 6584 / H10) (Clostridium cellulolyticum).